Reading from the N-terminus, the 546-residue chain is CTP synthase (546 aa).

Positions 1 to 266 (MAKYYIFITG…DSYVCDRFCI (266 aa)) are amidoligase domain. A CTP-binding site is contributed by Ser14. Ser14 is a binding site for UTP. ATP contacts are provided by residues 15 to 20 (SLGKGI) and Asp72. Mg(2+) contacts are provided by Asp72 and Glu140. CTP-binding positions include 147 to 149 (DIE), 187 to 192 (KTKPTQ), and Lys223. UTP-binding positions include 187–192 (KTKPTQ) and Lys223. Positions 291 to 544 (NIGIIGKYTE…VKAAFDFKNK (254 aa)) constitute a Glutamine amidotransferase type-1 domain. Gly352 lines the L-glutamine pocket. Cys379 functions as the Nucleophile; for glutamine hydrolysis in the catalytic mechanism. L-glutamine is bound by residues 380–383 (LGMQ), Glu403, and Arg470. Active-site residues include His517 and Glu519.

This sequence belongs to the CTP synthase family. As to quaternary structure, homotetramer.

The catalysed reaction is UTP + L-glutamine + ATP + H2O = CTP + L-glutamate + ADP + phosphate + 2 H(+). The enzyme catalyses L-glutamine + H2O = L-glutamate + NH4(+). It carries out the reaction UTP + NH4(+) + ATP = CTP + ADP + phosphate + 2 H(+). It functions in the pathway pyrimidine metabolism; CTP biosynthesis via de novo pathway; CTP from UDP: step 2/2. Its activity is regulated as follows. Allosterically activated by GTP, when glutamine is the substrate; GTP has no effect on the reaction when ammonia is the substrate. The allosteric effector GTP functions by stabilizing the protein conformation that binds the tetrahedral intermediate(s) formed during glutamine hydrolysis. Inhibited by the product CTP, via allosteric rather than competitive inhibition. In terms of biological role, catalyzes the ATP-dependent amination of UTP to CTP with either L-glutamine or ammonia as the source of nitrogen. Regulates intracellular CTP levels through interactions with the four ribonucleotide triphosphates. This is CTP synthase from Wigglesworthia glossinidia brevipalpis.